Consider the following 273-residue polypeptide: Ribosomal RNA small subunit methyltransferase A (273 aa).

Asn-18, Leu-20, Gly-45, Glu-66, Asp-91, and Asn-113 together coordinate S-adenosyl-L-methionine.

This sequence belongs to the class I-like SAM-binding methyltransferase superfamily. rRNA adenine N(6)-methyltransferase family. RsmA subfamily.

Its subcellular location is the cytoplasm. The catalysed reaction is adenosine(1518)/adenosine(1519) in 16S rRNA + 4 S-adenosyl-L-methionine = N(6)-dimethyladenosine(1518)/N(6)-dimethyladenosine(1519) in 16S rRNA + 4 S-adenosyl-L-homocysteine + 4 H(+). In terms of biological role, specifically dimethylates two adjacent adenosines (A1518 and A1519) in the loop of a conserved hairpin near the 3'-end of 16S rRNA in the 30S particle. May play a critical role in biogenesis of 30S subunits. The protein is Ribosomal RNA small subunit methyltransferase A of Escherichia coli (strain SE11).